The chain runs to 633 residues: Probable potassium transport system protein Kup 2 (633 aa).

A run of 12 helical transmembrane segments spans residues 18-38 (FLAM…TSPL), 61-81 (LISL…VLFL), 109-129 (LMFM…MITP), 145-165 (PAFH…LFAV), 173-193 (VSIF…AAGV), 211-231 (AVTF…AVFL), 255-275 (WFAV…ALVL), 287-307 (LMFP…ATII), 345-365 (IYLP…MFMF), 371-391 (LATA…VLAF), 405-425 (ATAV…ANLF), and 427-447 (IHDG…TMWT).

Belongs to the HAK/KUP transporter (TC 2.A.72) family.

The protein resides in the cell inner membrane. It carries out the reaction K(+)(in) + H(+)(in) = K(+)(out) + H(+)(out). Functionally, transport of potassium into the cell. Likely operates as a K(+):H(+) symporter. This chain is Probable potassium transport system protein Kup 2, found in Sinorhizobium medicae (strain WSM419) (Ensifer medicae).